The sequence spans 90 residues: Small ribosomal subunit protein bS16 (90 aa).

Belongs to the bacterial ribosomal protein bS16 family.

The protein is Small ribosomal subunit protein bS16 of Fervidobacterium nodosum (strain ATCC 35602 / DSM 5306 / Rt17-B1).